The primary structure comprises 1686 residues: Thrombospondin type-1 domain-containing protein 7A (1686 aa).

Residues 1-36 form the signal peptide; it reads MGLASRAPGKGGTSAGALASLFRVALLFFGLWDVQT. The Extracellular portion of the chain corresponds to 37-1635; the sequence is QTVANTRPTY…FGPDGKLKTW (1599 aa). TSP type-1 domains follow at residues 44–103, 107–181, and 183–236; these read PTYI…RVCD, ELYD…IPCP, and DCVV…GKCE. An N-linked (GlcNAc...) asparagine glycan is attached at N223. Residues 257–321 form a disordered region; that stretch reads IRQARDTGEA…EKKRMRDPET (65 aa). Composition is skewed to basic and acidic residues over residues 259 to 272 and 294 to 321; these read QARDTGEARVPKAE and EKKELRESKGERVRERVKEKKRMRDPET. 16 consecutive TSP type-1 domains span residues 385–441, 448–535, 537–596, 656–717, 718–797, 799–859, 860–932, 934–985, 988–1061, 1063–1123, 1124–1191, 1193–1247, 1248–1311, 1313–1368, 1369–1439, and 1441–1502; these read DCEV…SPQG, VVYN…IPCP, ECEV…PSCY, DCVL…HPCT, VYHW…LPCK, DCVV…SVCP, GYRW…LPCQ, DCQL…QYCP, KYNA…IPCP, DCKL…SDCS, QYVW…LPCP, DCVL…SNCF, HYSY…VECP, NCQL…KPCF, SWRY…VPCP, and ECYL…GQCY. Cystine bridges form between C460–C530, C480–C534, and C491–C519. N-linked (GlcNAc...) asparagine glycosylation occurs at N475. N525 carries an N-linked (GlcNAc...) asparagine glycan. 2 disulfides stabilise this stretch: C657–C699 and C668–C672. N701 is a glycosylation site (N-linked (GlcNAc...) asparagine). Disulfide bonds link C711–C716, C729–C792, C756–C796, C767–C780, C800–C842, C811–C815, and C852–C858. An N-linked (GlcNAc...) asparagine glycan is attached at N739. N-linked (GlcNAc...) asparagine glycosylation is present at N996. Intrachain disulfides connect C1000–C1056, C1022–C1060, C1033–C1046, C1064–C1101, C1075–C1079, and C1118–C1122. N1071 carries N-linked (GlcNAc...) asparagine glycosylation. An N-linked (GlcNAc...) asparagine glycan is attached at N1212. C1240 and C1246 are oxidised to a cystine. N1252 carries N-linked (GlcNAc...) asparagine glycosylation. Cystine bridges form between C1259–C1306, C1267–C1310, C1278–C1291, C1314–C1352, C1325–C1329, C1362–C1367, C1378–C1434, C1385–C1438, C1396–C1415, C1442–C1486, C1453–C1457, and C1496–C1501. An N-linked (GlcNAc...) asparagine glycan is attached at N1303. Residue N1393 is glycosylated (N-linked (GlcNAc...) asparagine). An N-linked (GlcNAc...) asparagine glycan is attached at N1527. Residues 1636 to 1656 form a helical membrane-spanning segment; it reads VYGVAAGAFVLLVFIVSMTYL. Residues 1657–1686 are Cytoplasmic-facing; it reads ACKKPKKPQRRQMNNRLKPLTLAYDGDADM.

Post-translationally, extensively N-glycosylated.

It is found in the cell membrane. It localises to the cell projection. Required for normal sprouting angiogenesis and normal embryonic development of intersegmental vessels (ISV). Required for normal function of the glomerular filtration barrier. Required for normal axon outgrowth on embryonic motor neurons at the level of the horizontal myoseptum. Required for normal expression of notch1b, suggesting that its functions in angiogenesis and neuron outgrowth are due to decreased expression of notch1b. Plays a role in actin cytoskeleton rearrangement. This is Thrombospondin type-1 domain-containing protein 7A from Danio rerio (Zebrafish).